The following is a 472-amino-acid chain: Transmembrane protein 8B (472 aa).

Residues 1–36 (MNMPQSLGNQPLPPEPPSLGTPAEGPGTTSPPEHCW) are disordered. Topologically, residues 1–233 (MNMPQSLGNQ…ADALTYGFQL (233 aa)) are extracellular. N-linked (GlcNAc...) asparagine glycans are attached at residues asparagine 92 and asparagine 100. Positions 182-221 (FLSPCVDDCGPYGQCKLLRTHNYLYAACECKAGWRGWGCT) constitute an EGF-like domain. 3 cysteine pairs are disulfide-bonded: cysteine 186–cysteine 196, cysteine 190–cysteine 209, and cysteine 211–cysteine 220. A helical transmembrane segment spans residues 234–254 (LSTLLLCLSNLMFLPPVVLAI). Residues 255 to 257 (RSR) lie on the Cytoplasmic side of the membrane. A helical membrane pass occupies residues 258–277 (YVLEAAVYTFTMFFSTFYHA). The Extracellular portion of the chain corresponds to 278 to 292 (CDQPGIVVFCIMDYD). A helical membrane pass occupies residues 293–313 (VLQFCDFLGSLMSVWVTVIAM). Residues 314–315 (AR) lie on the Cytoplasmic side of the membrane. Residues 316–336 (LQPVVKQVLYLLGAMLLSMAL) traverse the membrane as a helical segment. At 337–342 (QLDRHG) the chain is on the extracellular side. A helical membrane pass occupies residues 343–363 (LWNLLGPSLFALGILATAWTV). Residues 364 to 379 (RSVRRRHCYPPTWRRW) lie on the Cytoplasmic side of the membrane. Residues 380–400 (LFYLCPGSLIAGSAVLLYAFV) traverse the membrane as a helical segment. Residues 401 to 405 (ETRDN) are Extracellular-facing. Residues 406 to 426 (YFYIHSIWHMLIAGSVGFLLP) traverse the membrane as a helical segment. The Cytoplasmic portion of the chain corresponds to 427–472 (PRAKTDHGVPSGARARGCGYQLCINEQEELGLVGPGGATVSSICAS).

The protein belongs to the TMEM8 family. Isoform 2 (via its cytoplasmic part) interacts with EZR. In terms of processing, isoform 2 is N-glycosylated.

The protein resides in the cell membrane. It localises to the cytoplasm. It is found in the nucleus. Its subcellular location is the mitochondrion. The protein localises to the endoplasmic reticulum. Its function is as follows. May function as a regulator of the EGFR pathway. Probable tumor suppressor which may function in cell growth, proliferation and adhesion. The polypeptide is Transmembrane protein 8B (TMEM8B) (Homo sapiens (Human)).